The sequence spans 454 residues: Bifunctional protein GlmU (454 aa).

The segment at 1–232 is pyrophosphorylase; the sequence is MTDRTCLSIV…VDNVIGINNR (232 aa). UDP-N-acetyl-alpha-D-glucosamine-binding positions include 11–14, Lys-25, Gln-78, and 83–84; these read LAAG and GT. Asp-108 is a Mg(2+) binding site. Residues Gly-144, Glu-158, Asn-173, and Asn-230 each contribute to the UDP-N-acetyl-alpha-D-glucosamine site. Asn-230 is a binding site for Mg(2+). The interval 233–253 is linker; that stretch reads AELAEAETIWQNRKRRELMLS. Residues 254–454 are N-acetyltransferase; that stretch reads GVTLIAPETV…AIKAAKSVSK (201 aa). The UDP-N-acetyl-alpha-D-glucosamine site is built by Arg-319 and Lys-337. His-349 serves as the catalytic Proton acceptor. 2 residues coordinate UDP-N-acetyl-alpha-D-glucosamine: Tyr-352 and Asn-363. Acetyl-CoA-binding positions include Ala-366, 372-373, Ser-391, Ser-409, and Arg-426; that span reads NY.

This sequence in the N-terminal section; belongs to the N-acetylglucosamine-1-phosphate uridyltransferase family. It in the C-terminal section; belongs to the transferase hexapeptide repeat family. As to quaternary structure, homotrimer. Mg(2+) serves as cofactor.

It localises to the cytoplasm. It catalyses the reaction alpha-D-glucosamine 1-phosphate + acetyl-CoA = N-acetyl-alpha-D-glucosamine 1-phosphate + CoA + H(+). It carries out the reaction N-acetyl-alpha-D-glucosamine 1-phosphate + UTP + H(+) = UDP-N-acetyl-alpha-D-glucosamine + diphosphate. Its pathway is nucleotide-sugar biosynthesis; UDP-N-acetyl-alpha-D-glucosamine biosynthesis; N-acetyl-alpha-D-glucosamine 1-phosphate from alpha-D-glucosamine 6-phosphate (route II): step 2/2. The protein operates within nucleotide-sugar biosynthesis; UDP-N-acetyl-alpha-D-glucosamine biosynthesis; UDP-N-acetyl-alpha-D-glucosamine from N-acetyl-alpha-D-glucosamine 1-phosphate: step 1/1. It participates in bacterial outer membrane biogenesis; LPS lipid A biosynthesis. Catalyzes the last two sequential reactions in the de novo biosynthetic pathway for UDP-N-acetylglucosamine (UDP-GlcNAc). The C-terminal domain catalyzes the transfer of acetyl group from acetyl coenzyme A to glucosamine-1-phosphate (GlcN-1-P) to produce N-acetylglucosamine-1-phosphate (GlcNAc-1-P), which is converted into UDP-GlcNAc by the transfer of uridine 5-monophosphate (from uridine 5-triphosphate), a reaction catalyzed by the N-terminal domain. The polypeptide is Bifunctional protein GlmU (Brucella abortus (strain S19)).